A 233-amino-acid polypeptide reads, in one-letter code: Chromosome partition protein MukE (233 aa).

Positions 207-233 (SLSLHDESDDADVTMGNAADSVEDEQE) are disordered.

It belongs to the MukE family. Interacts, and probably forms a ternary complex, with MukF and MukB. The complex formation is stimulated by calcium or magnesium.

Its subcellular location is the cytoplasm. The protein resides in the nucleoid. In terms of biological role, involved in chromosome condensation, segregation and cell cycle progression. May participate in facilitating chromosome segregation by condensation DNA from both sides of a centrally located replisome during cell division. Probably acts via its interaction with MukB and MukF. The chain is Chromosome partition protein MukE from Yersinia pestis.